A 320-amino-acid chain; its full sequence is Eukaryotic translation initiation factor 3 subunit G (320 aa).

The segment at 1–60 (MPTGDFDSKPSWADQVEEEGEDDKCVTSELLKGIPLPTGDTSPEPELLPGDPLPPPKEVI) is disordered. Phosphoserine is present on residues Ser8 and Ser11. Phosphothreonine occurs at positions 38 and 41. 4 positions are modified to phosphoserine: Ser42, Ser189, Ser223, and Ser264. The segment at 204 to 233 (QAAQSKTGKYVPPSLRDGASRRGESMQPNR) is disordered. Over residues 221 to 233 (GASRRGESMQPNR) the composition is skewed to basic and acidic residues. The region spanning 239–317 (ATIRVTNLSE…LILNVEWAKP (79 aa)) is the RRM domain.

This sequence belongs to the eIF-3 subunit G family. Component of the eukaryotic translation initiation factor 3 (eIF-3) complex, which is composed of 13 subunits: EIF3A, EIF3B, EIF3C, EIF3D, EIF3E, EIF3F, EIF3G, EIF3H, EIF3I, EIF3J, EIF3K, EIF3L and EIF3M. The eIF-3 complex appears to include 3 stable modules: module A is composed of EIF3A, EIF3B, EIF3G and EIF3I; module B is composed of EIF3F, EIF3H, and EIF3M; and module C is composed of EIF3C, EIF3D, EIF3E, EIF3K and EIF3L. EIF3C of module C binds EIF3B of module A and EIF3H of module B, thereby linking the three modules. EIF3J is a labile subunit that binds to the eIF-3 complex via EIF3B. The eIF-3 complex may interact with RPS6KB1 under conditions of nutrient depletion. Mitogenic stimulation may lead to binding and activation of a complex composed of MTOR and RPTOR, leading to phosphorylation and release of RPS6KB1 and binding of EIF4B to eIF-3. Interacts (via C-terminus) with AIFM1 (via N-terminus). Interacts with DHX33; the interaction is independent of RNA. Post-translationally, phosphorylated. Phosphorylation is enhanced upon serum stimulation.

The protein localises to the cytoplasm. It is found in the nucleus. Its subcellular location is the perinuclear region. RNA-binding component of the eukaryotic translation initiation factor 3 (eIF-3) complex, which is required for several steps in the initiation of protein synthesis. The eIF-3 complex associates with the 40S ribosome and facilitates the recruitment of eIF-1, eIF-1A, eIF-2:GTP:methionyl-tRNAi and eIF-5 to form the 43S pre-initiation complex (43S PIC). The eIF-3 complex stimulates mRNA recruitment to the 43S PIC and scanning of the mRNA for AUG recognition. The eIF-3 complex is also required for disassembly and recycling of post-termination ribosomal complexes and subsequently prevents premature joining of the 40S and 60S ribosomal subunits prior to initiation. The eIF-3 complex specifically targets and initiates translation of a subset of mRNAs involved in cell proliferation, including cell cycling, differentiation and apoptosis, and uses different modes of RNA stem-loop binding to exert either translational activation or repression. This subunit can bind 18S rRNA. The polypeptide is Eukaryotic translation initiation factor 3 subunit G (Eif3g) (Mus musculus (Mouse)).